We begin with the raw amino-acid sequence, 100 residues long: Large ribosomal subunit protein uL23 (100 aa).

This sequence belongs to the universal ribosomal protein uL23 family. Part of the 50S ribosomal subunit. Contacts protein L29, and trigger factor when it is bound to the ribosome.

In terms of biological role, one of the early assembly proteins it binds 23S rRNA. One of the proteins that surrounds the polypeptide exit tunnel on the outside of the ribosome. Forms the main docking site for trigger factor binding to the ribosome. The sequence is that of Large ribosomal subunit protein uL23 from Photobacterium profundum (strain SS9).